We begin with the raw amino-acid sequence, 415 residues long: YDG domain-containing protein At5g47160 (415 aa).

The interval 163-186 is disordered; sequence KKLSNASRLRANAHRPTQHKDERR. The 146-residue stretch at 262 to 407 folds into the YDG domain; it reads GSVPGIKVGD…NILFKFKLRR (146 aa).

The protein resides in the nucleus. The polypeptide is YDG domain-containing protein At5g47160 (Arabidopsis thaliana (Mouse-ear cress)).